Here is a 192-residue protein sequence, read N- to C-terminus: Ion-translocating oxidoreductase complex subunit A (192 aa).

A run of 6 helical transmembrane segments spans residues 5–25 (LLLL…FLGL), 39–59 (IGMS…SFLV), 72–92 (LRTM…EMLV), 102–122 (ALGI…VALL), 134–154 (AIYG…FSAM), and 171–191 (AIAM…TGLV).

It belongs to the NqrDE/RnfAE family. The complex is composed of six subunits: RnfA, RnfB, RnfC, RnfD, RnfE and RnfG.

It localises to the cell inner membrane. Its function is as follows. Part of a membrane-bound complex that couples electron transfer with translocation of ions across the membrane. In Shewanella amazonensis (strain ATCC BAA-1098 / SB2B), this protein is Ion-translocating oxidoreductase complex subunit A.